The primary structure comprises 633 residues: MFRSGERPLGGLAVPAEQRDFLPLETTNNNNNHHQPAAWARRASAGPSASPVPSAPSSPRPAAALPASESTDPASGSSNKRKRDNKASTYGLNYSLLQPSGGRAAGGGRADGGGGVYSGTPWKRRNYNQGVVGLHEEISDFYEYMSPRPEEEKMRMEVVSRIESVIKELWPSADVQIFGSFKTGLYLPTSDIDLVVFGKWENLPLWTLEEALRKHKVADEDSVKVLDKATVPIIKLTDSFTEVKVDISFNVQNGVRAADLIKDFTKKYPVLPYLVLVLKQFLLQRDLNEVFTGGIGSYSLFLMAVSFLQLHPREDACIPNTNYGVLLIEFFELYGRHFNYLKTGIRIKDGGSYVAKDEVQKNMLDGYRPSMLYIEDPLQPGNDVGRSSYGAMQVKQAFDYAYVVLSHAVSPIAKYYPNNETESILGRIIRVTDEVATYRDWISKQWGLQNRPEPSCNGNGVTLIVDTQQLDKCNNNLSEEKEALGKCRSNASEPLSKHSSNSSSGPVSSSSATQSSSSDVDSDATPCKTPKQLLCRPPTVTRVGSQDVSLEVSQAVGKMQSTQTTNTPNNANKSQHGSARLFRSSSKGFQGTAQTSHGALMTSKQHQGKSNTQYYHGKKRRHKRDAPLSELCR.

The tract at residues 1-115 (MFRSGERPLG…GGGRADGGGG (115 aa)) is disordered. Residues 25-34 (ETTNNNNNHH) show a composition bias toward polar residues. Composition is skewed to low complexity over residues 36–52 (PAAW…ASPV) and 60–70 (RPAAALPASES). Over residues 87-98 (ASTYGLNYSLLQ) the composition is skewed to polar residues. The segment covering 103–115 (RAAGGGRADGGGG) has biased composition (gly residues). The Mg(2+) site is built by Asp191 and Asp193. Gly254, Lys279, Ser297, Tyr298, Asn382, and Arg386 together coordinate ATP. Residues 322 to 382 (NYGVLLIEFF…YIEDPLQPGN (61 aa)) form the PAP-associated domain. The interval 484–633 (LGKCRSNASE…RDAPLSELCR (150 aa)) is disordered. Positions 492 to 519 (SEPLSKHSSNSSSGPVSSSSATQSSSSD) are enriched in low complexity. Residue Lys531 forms a Glycyl lysine isopeptide (Lys-Gly) (interchain with G-Cter in SUMO2) linkage. Residues 542–552 (RVGSQDVSLEV) show a composition bias toward polar residues. Ser545 carries the phosphoserine modification. Glycyl lysine isopeptide (Lys-Gly) (interchain with G-Cter in SUMO2) cross-links involve residues Lys558, Lys573, and Lys587. Residues 559 to 614 (MQSTQTTNTPNNANKSQHGSARLFRSSSKGFQGTAQTSHGALMTSKQHQGKSNTQY) are compositionally biased toward polar residues. The Basic, involved in binding of the RNA primer signature appears at 618-624 (KKRRHKR).

It belongs to the DNA polymerase type-B-like family. Component of a nucleolar TRAMP-like complex, an ATP-dependent exosome regulatory complex consisting of a helicase (MTREX), an oligadenylate polymerase (TENT4B or TENT4A), and a substrate specific RNA-binding factor (ZCCHC7 or ZCCHC8). Several TRAMP-like complexes exist with specific compositions and are associated with nuclear, or nucleolar RNA exosomes. The cofactor is Mg(2+). Mn(2+) is required as a cofactor.

Its subcellular location is the nucleus. It is found in the nucleolus. The protein localises to the cytoplasm. The catalysed reaction is RNA(n) + ATP = RNA(n)-3'-adenine ribonucleotide + diphosphate. In terms of biological role, terminal nucleotidyltransferase that catalyzes preferentially the transfer of ATP and GTP on RNA 3' poly(A) tail creating a heterogeneous 3' poly(A) tail leading to mRNAs stabilization by protecting mRNAs from active deadenylation. Also functions as a catalytic subunit of a TRAMP-like complex which has a poly(A) RNA polymerase activity and is involved in a post-transcriptional quality control mechanism. Polyadenylation with short oligo(A) tails is required for the degradative activity of the exosome on several of its nuclear RNA substrates. Doesn't need a cofactor for polyadenylation activity (in vitro). Plays a role in replication-dependent histone mRNA degradation, probably through terminal uridylation of mature histone mRNAs. May play a role in sister chromatid cohesion. The chain is Terminal nucleotidyltransferase 4B from Mus musculus (Mouse).